The primary structure comprises 445 residues: Inward rectifier potassium channel 4 (445 aa).

Residues 1–55 (MHGHNRNGQAHVPRRKRRNRFVKKNGQCNVYFANLSNKSQRYMADIFTTCVDTRW) are Cytoplasmic-facing. A helical transmembrane segment spans residues 56–80 (RYMLMIFSAAFLVSWLFFGLLFWWI). At 81-119 (AFFHGDLEASPSVPAVGGPGGNGGESPNAPKPCIMHVNG) the chain is on the extracellular side. Residues 120–131 (FLGAFLFSVETQ) constitute an intramembrane region (helical; Pore-forming). The pore-forming intramembrane region spans 132-138 (TTIGYGF). The short motif at 133-138 (TIGYGF) is the Selectivity filter element. The Extracellular portion of the chain corresponds to 139–147 (RCVTEECPL). The chain crosses the membrane as a helical span at residues 148–169 (AVIAVVVQSIVGCVIDSFMIGT). At 170–445 (IMAKMARPKK…NISYRRESRI (276 aa)) the chain is on the cytoplasmic side. Residues 443–445 (SRI) carry the PDZ-binding motif.

It belongs to the inward rectifier-type potassium channel (TC 1.A.2.1) family. KCNJ4 subfamily. Homomultimeric and heteromultimeric association with KCNJ2 and KCNJ12. Interacts with DLG2 and DLG4. Associates, via its PDZ-recognition domain, with a complex containing LIN7A, LIN7B, LIN7C, DLG1, CASK and APBA1. Interacts with TAX1BP3. TAX1BP3 competes with LIN7 family members for KCNJ4 binding. As to expression, highly expressed in the forebrain, moderately in skeletal muscle. Im olfactory bulb, specifically expressed at the postsynaptic membrane of dendritic spines of granule cells.

The protein localises to the cell membrane. It localises to the postsynaptic cell membrane. Its subcellular location is the cytoplasmic vesicle membrane. It catalyses the reaction K(+)(in) = K(+)(out). Functionally, inward rectifier potassium channels are characterized by a greater tendency to allow potassium to flow into the cell rather than out of it. Their voltage dependence is regulated by the concentration of extracellular potassium; as external potassium is raised, the voltage range of the channel opening shifts to more positive voltages. The inward rectification is mainly due to the blockage of outward current by internal magnesium. Can be blocked by extracellular barium and cesium. The polypeptide is Inward rectifier potassium channel 4 (Kcnj4) (Mus musculus (Mouse)).